Here is a 433-residue protein sequence, read N- to C-terminus: Citrate synthase, mitochondrial (433 aa).

Active-site residues include histidine 274 and histidine 320. Oxaloacetate is bound at residue arginine 329. The active site involves aspartate 375. Oxaloacetate is bound by residues arginine 401 and arginine 421.

Belongs to the citrate synthase family. Homodimer.

It localises to the mitochondrion matrix. It catalyses the reaction oxaloacetate + acetyl-CoA + H2O = citrate + CoA + H(+). The protein operates within carbohydrate metabolism; tricarboxylic acid cycle; isocitrate from oxaloacetate: step 1/2. Functionally, key enzyme of the Krebs tricarboxylic acid cycle which catalyzes the synthesis of citrate from acetyl coenzyme A and oxaloacetate. In Gallus gallus (Chicken), this protein is Citrate synthase, mitochondrial (CS).